The following is a 299-amino-acid chain: Pentalenolactone F synthase (299 aa).

2 residues coordinate Fe cation: histidine 105 and aspartate 107. 2 residues coordinate 2-oxoglutarate: threonine 133 and tryptophan 251. Residue histidine 266 coordinates Fe cation. Arginine 277 provides a ligand contact to 2-oxoglutarate.

This sequence belongs to the TfdA dioxygenase family. Requires Fe(2+) as cofactor.

It carries out the reaction pentalenolactone D + 2 2-oxoglutarate + 2 O2 = pentalenolactone F + 2 succinate + 2 CO2 + H2O. It participates in antibiotic biosynthesis; pentalenolactone biosynthesis. Its activity is regulated as follows. Activated by ascorbate. In terms of biological role, catalyzes the Fe(2+) and alpha-ketoglutarate-dependent oxidation of pentalenolactone D to pentalenolactone F in the biosynthesis of pentalenolactone antibiotic. Also able to catalyze the oxidation of pentalenolactone D to pentalenolactone E. This chain is Pentalenolactone F synthase (pntD), found in Streptomyces arenae.